Reading from the N-terminus, the 200-residue chain is Probable molybdenum cofactor guanylyltransferase (200 aa).

Residues 9–11 (LAG), lysine 21, aspartate 69, and aspartate 100 each bind GTP. Aspartate 100 is a Mg(2+) binding site.

This sequence belongs to the MobA family. Requires Mg(2+) as cofactor.

The protein localises to the cytoplasm. It carries out the reaction Mo-molybdopterin + GTP + H(+) = Mo-molybdopterin guanine dinucleotide + diphosphate. In terms of biological role, transfers a GMP moiety from GTP to Mo-molybdopterin (Mo-MPT) cofactor (Moco or molybdenum cofactor) to form Mo-molybdopterin guanine dinucleotide (Mo-MGD) cofactor. The polypeptide is Probable molybdenum cofactor guanylyltransferase (Bacillus anthracis (strain CDC 684 / NRRL 3495)).